The sequence spans 885 residues: DNA mismatch repair protein MutS (885 aa).

The interval 1 to 67 is disordered; sequence MAPGEQQLSL…SNNDDEGLPR (67 aa). Residues 26–36 show a composition bias toward basic and acidic residues; it reads SEDKTEESERP. 691–698 contacts ATP; sequence GPNASGKS.

Belongs to the DNA mismatch repair MutS family.

Functionally, this protein is involved in the repair of mismatches in DNA. It is possible that it carries out the mismatch recognition step. This protein has a weak ATPase activity. The polypeptide is DNA mismatch repair protein MutS (Synechococcus sp. (strain RCC307)).